A 38-amino-acid chain; its full sequence is Photosystem II reaction center protein X (38 aa).

Residues 9–29 form a helical membrane-spanning segment; that stretch reads ISSLTAGGLVVLTIAVALIVI.

It belongs to the PsbX family. Type 1 subfamily. In terms of assembly, PSII is composed of 1 copy each of membrane proteins PsbA, PsbB, PsbC, PsbD, PsbE, PsbF, PsbH, PsbI, PsbJ, PsbK, PsbL, PsbM, PsbT, PsbX, PsbY, PsbZ, Psb30/Ycf12, at least 3 peripheral proteins of the oxygen-evolving complex and a large number of cofactors. It forms dimeric complexes.

It localises to the plastid. The protein localises to the chloroplast thylakoid membrane. Involved in the binding and/or turnover of quinones at the Q(B) site of photosystem II (PSII). PSII is a light-driven water plastoquinone oxidoreductase, using light energy to abstract electrons from H(2)O, generating a proton gradient subsequently used for ATP formation. In Trieres chinensis (Marine centric diatom), this protein is Photosystem II reaction center protein X.